We begin with the raw amino-acid sequence, 168 residues long: Peptide deformylase (168 aa).

Residues Cys92 and His134 each coordinate Fe cation. Glu135 is an active-site residue. Residue His138 coordinates Fe cation.

The protein belongs to the polypeptide deformylase family. The cofactor is Fe(2+).

It catalyses the reaction N-terminal N-formyl-L-methionyl-[peptide] + H2O = N-terminal L-methionyl-[peptide] + formate. Its function is as follows. Removes the formyl group from the N-terminal Met of newly synthesized proteins. Requires at least a dipeptide for an efficient rate of reaction. N-terminal L-methionine is a prerequisite for activity but the enzyme has broad specificity at other positions. This is Peptide deformylase from Azotobacter vinelandii (strain DJ / ATCC BAA-1303).